The sequence spans 69 residues: Proteinase inhibitor (69 aa).

Ser-1 bears the N-acetylserine mark. Cys-4 and Cys-49 are joined by a disulfide.

Functionally, in vitro, strong inhibitor of bovine beta-trypsin, weak inhibitor of alpha-chymotrypsin, subtilisin BPN', subtilisin Carlsberg and cathepsin G. In Linum usitatissimum (Flax), this protein is Proteinase inhibitor.